The following is a 331-amino-acid chain: Hyaluronidase (331 aa).

Intrachain disulfides connect Cys-19–Cys-308 and Cys-185–Cys-197. Residue Asn-79 is glycosylated (N-linked (GlcNAc...) asparagine). The Proton donor role is filled by Glu-109. Asn-325 is a glycosylation site (N-linked (GlcNAc...) asparagine).

The protein belongs to the glycosyl hydrolase 56 family. In terms of tissue distribution, expressed by the venom gland.

It is found in the secreted. The catalysed reaction is Random hydrolysis of (1-&gt;4)-linkages between N-acetyl-beta-D-glucosamine and D-glucuronate residues in hyaluronate.. Functionally, hydrolyzes high molecular weight hyaluronic acid to produce small oligosaccharides. The polypeptide is Hyaluronidase (Dolichovespula maculata (Bald-faced hornet)).